We begin with the raw amino-acid sequence, 73 residues long: Translation initiation factor IF-1 (73 aa).

The S1-like domain occupies 1–73 (MAKKEDTIVL…TKARVVYRHR (73 aa)).

It belongs to the IF-1 family. As to quaternary structure, component of the 30S ribosomal translation pre-initiation complex which assembles on the 30S ribosome in the order IF-2 and IF-3, IF-1 and N-formylmethionyl-tRNA(fMet); mRNA recruitment can occur at any time during PIC assembly.

The protein resides in the cytoplasm. In terms of biological role, one of the essential components for the initiation of protein synthesis. Stabilizes the binding of IF-2 and IF-3 on the 30S subunit to which N-formylmethionyl-tRNA(fMet) subsequently binds. Helps modulate mRNA selection, yielding the 30S pre-initiation complex (PIC). Upon addition of the 50S ribosomal subunit IF-1, IF-2 and IF-3 are released leaving the mature 70S translation initiation complex. In Chlamydia caviae (strain ATCC VR-813 / DSM 19441 / 03DC25 / GPIC) (Chlamydophila caviae), this protein is Translation initiation factor IF-1.